Reading from the N-terminus, the 473-residue chain is Probable aspartokinase (473 aa).

ACT domains lie at 323 to 392 and 409 to 473; these read IFGA…FLNN and VVGA…KTNS.

This sequence belongs to the aspartokinase family.

It catalyses the reaction L-aspartate + ATP = 4-phospho-L-aspartate + ADP. The protein operates within amino-acid biosynthesis; L-lysine biosynthesis via DAP pathway; (S)-tetrahydrodipicolinate from L-aspartate: step 1/4. It participates in amino-acid biosynthesis; L-methionine biosynthesis via de novo pathway; L-homoserine from L-aspartate: step 1/3. Its pathway is amino-acid biosynthesis; L-threonine biosynthesis; L-threonine from L-aspartate: step 1/5. This chain is Probable aspartokinase, found in Methanocaldococcus jannaschii (strain ATCC 43067 / DSM 2661 / JAL-1 / JCM 10045 / NBRC 100440) (Methanococcus jannaschii).